Here is a 462-residue protein sequence, read N- to C-terminus: UDP-N-acetylmuramate--L-alanine ligase (462 aa).

116–122 contributes to the ATP binding site; it reads GAHGKTT.

It belongs to the MurCDEF family.

The protein resides in the cytoplasm. The catalysed reaction is UDP-N-acetyl-alpha-D-muramate + L-alanine + ATP = UDP-N-acetyl-alpha-D-muramoyl-L-alanine + ADP + phosphate + H(+). The protein operates within cell wall biogenesis; peptidoglycan biosynthesis. Its function is as follows. Cell wall formation. The sequence is that of UDP-N-acetylmuramate--L-alanine ligase from Desulforamulus reducens (strain ATCC BAA-1160 / DSM 100696 / MI-1) (Desulfotomaculum reducens).